Here is a 262-residue protein sequence, read N- to C-terminus: Adenosylcobinamide-GDP ribazoletransferase (262 aa).

6 helical membrane passes run 43 to 63, 66 to 86, 120 to 140, 146 to 166, 191 to 211, and 242 to 262; these read YFGL…WLTQ, LPAG…TGGF, GALA…ELAL, AGSA…SIIF, LLIL…LAAL, and AAQQ…GNIL.

The protein belongs to the CobS family. The cofactor is Mg(2+).

It localises to the cell inner membrane. The catalysed reaction is alpha-ribazole + adenosylcob(III)inamide-GDP = adenosylcob(III)alamin + GMP + H(+). The enzyme catalyses alpha-ribazole 5'-phosphate + adenosylcob(III)inamide-GDP = adenosylcob(III)alamin 5'-phosphate + GMP + H(+). Its pathway is cofactor biosynthesis; adenosylcobalamin biosynthesis; adenosylcobalamin from cob(II)yrinate a,c-diamide: step 7/7. In terms of biological role, joins adenosylcobinamide-GDP and alpha-ribazole to generate adenosylcobalamin (Ado-cobalamin). Also synthesizes adenosylcobalamin 5'-phosphate from adenosylcobinamide-GDP and alpha-ribazole 5'-phosphate. This is Adenosylcobinamide-GDP ribazoletransferase from Shewanella baltica (strain OS195).